Here is a 341-residue protein sequence, read N- to C-terminus: L-threonine 3-dehydrogenase (341 aa).

Cysteine 38 contributes to the Zn(2+) binding site. Residues threonine 40 and histidine 43 each act as charge relay system in the active site. Positions 63, 64, 93, 96, 99, and 107 each coordinate Zn(2+). Residues isoleucine 175, aspartate 195, arginine 200, 262 to 264 (LGI), and 286 to 287 (IY) contribute to the NAD(+) site.

This sequence belongs to the zinc-containing alcohol dehydrogenase family. As to quaternary structure, homotetramer. Zn(2+) is required as a cofactor.

The protein localises to the cytoplasm. The enzyme catalyses L-threonine + NAD(+) = (2S)-2-amino-3-oxobutanoate + NADH + H(+). The protein operates within amino-acid degradation; L-threonine degradation via oxydo-reductase pathway; glycine from L-threonine: step 1/2. In terms of biological role, catalyzes the NAD(+)-dependent oxidation of L-threonine to 2-amino-3-ketobutyrate. The polypeptide is L-threonine 3-dehydrogenase (Salmonella arizonae (strain ATCC BAA-731 / CDC346-86 / RSK2980)).